We begin with the raw amino-acid sequence, 494 residues long: MDSHEVLLAATYLLGTLAAFCLGQSGRGGLDIQVMLSGSNSKCQGQVEIQMENKWKTVCSSSWRLSQDHSKNAQQASAVCKQLRCGDPLALGPFPSLNRPQNQVFCQGSPWSISNCNNTSSQDQCLPLSLICLEPQRTTPPPTTTPPTTVPEPTAPPRLQLVPGHEGLRCTGVVEFYNGSWGGTILYKAKDRPLGLGNLICKSLQCGSFLTHLSGTEAAGTPAPAELRDPRPLPIRWEAPNGSCVSLQQCFQKTTAQEGGQALTVICSDFQPKVQSRLVGGSSVCEGIAEVRQRSQWEALCDSSAARGRGRWEELCREQQCGDLISFHTVDADKTSPGFLCAQEKLSQCYHLQKKKHCNKRVFVTCQDPNPAGLAPGTVASIILTLVLLVVLLAMCGPLVYKKLVKKFRQKKQRQWIGPTGVNQNMSFHRSHTATVRSQVENPTASHVDNEYSQPPRNSHLSAYPALEGALHRSSTQPDNSSDSDYDLQVAQRL.

An N-terminal signal peptide occupies residues 1 to 23; sequence MDSHEVLLAATYLLGTLAAFCLG. Residues 25–371 are Extracellular-facing; that stretch reads SGRGGLDIQV…VFVTCQDPNP (347 aa). SRCR domains are found at residues 34-133, 159-268, and 276-367; these read VMLS…LICL, LQLV…VICS, and SRLV…VTCQ. 4 cysteine pairs are disulfide-bonded: C43–C85, C59–C125, C80–C132, and C106–C116. 4 N-linked (GlcNAc...) asparagine glycosylation sites follow: N117, N118, N178, and N241. 6 disulfide bridges follow: C201/C267, C244/C250, C285/C321, C301/C358, C316/C366, and C341/C349. Residues 372–401 form a helical membrane-spanning segment; the sequence is AGLAPGTVASIILTLVLLVVLLAMCGPLVY. At 402-494 the chain is on the cytoplasmic side; sequence KKLVKKFRQK…DYDLQVAQRL (93 aa). S438 is modified (phosphoserine). 2 stretches are compositionally biased toward polar residues: residues 439-461 and 473-483; these read QVEN…NSHL and RSSTQPDNSSD. Residues 439 to 494 form a disordered region; it reads QVENPTASHVDNEYSQPPRNSHLSAYPALEGALHRSSTQPDNSSDSDYDLQVAQRL. The residue at position 452 (Y452) is a Phosphotyrosine. S459, S482, and S484 each carry phosphoserine. The residue at position 486 (Y486) is a Phosphotyrosine.

Interacts with CD72/LYB-2. Interacts with PTPN6/SHP-1. Interacts with CBL. Interacts with CD5L. In terms of processing, phosphorylated on serine, threonine and tyrosine residues following TCR stimulation. Phosphorylated by LCK on Tyr-452 and Tyr-486 upon TCR engagement.

It is found in the cell membrane. Functionally, lymphoid-specific receptor expressed by all T-cells and in a subset of B-cells known as B1a cells. Plays a role in the regulation of TCR and BCR signaling, thymocyte selection, T-cell effector differentiation and immune tolerance. Acts by interacting with several ligands expressed on B-cells such as CD5L or CD72 and thereby plays an important role in contact-mediated, T-dependent B-cell activation and in the maintenance of regulatory T and B-cell homeostasis. Functions as a negative regulator of TCR signaling during thymocyte development by associating with several signaling proteins including LCK, CD3Z chain, PI3K or CBL. Mechanistically, co-engagement of CD3 with CD5 enhances phosphorylated CBL recruitment leading to increased VAV1 phosphorylation and degradation. Modulates B-cell biology through ERK1/2 activation in a Ca(2+)-dependent pathway via the non-selective Ca(2+) channel TRPC1, leading to IL-10 production. The polypeptide is T-cell surface glycoprotein CD5 (Cd5) (Mus musculus (Mouse)).